The following is a 305-amino-acid chain: Glutaminase (305 aa).

The substrate site is built by S61, N113, E158, N165, Y189, Y241, and V259.

This sequence belongs to the glutaminase family. In terms of assembly, homotetramer.

It carries out the reaction L-glutamine + H2O = L-glutamate + NH4(+). The protein is Glutaminase of Alkaliphilus metalliredigens (strain QYMF).